The following is a 315-amino-acid chain: tRNA dimethylallyltransferase (315 aa).

15 to 22 is an ATP binding site; it reads GPTACGKS. 17–22 contacts substrate; that stretch reads TACGKS. 2 interaction with substrate tRNA regions span residues 40-43 and 162-166; these read DSAL and QRLIR.

The protein belongs to the IPP transferase family. As to quaternary structure, monomer. Mg(2+) serves as cofactor.

It carries out the reaction adenosine(37) in tRNA + dimethylallyl diphosphate = N(6)-dimethylallyladenosine(37) in tRNA + diphosphate. Functionally, catalyzes the transfer of a dimethylallyl group onto the adenine at position 37 in tRNAs that read codons beginning with uridine, leading to the formation of N6-(dimethylallyl)adenosine (i(6)A). This is tRNA dimethylallyltransferase from Buchnera aphidicola subsp. Acyrthosiphon pisum (strain APS) (Acyrthosiphon pisum symbiotic bacterium).